The sequence spans 199 residues: Recombination protein RecR (199 aa).

The segment at 57-72 (CRQCRVLTEEPVCGLC) adopts a C4-type zinc-finger fold. A Toprim domain is found at 80-175 (SLLCVVEGPA…RTTRIAHGVP (96 aa)).

Belongs to the RecR family.

May play a role in DNA repair. It seems to be involved in an RecBC-independent recombinational process of DNA repair. It may act with RecF and RecO. This chain is Recombination protein RecR, found in Alkalilimnicola ehrlichii (strain ATCC BAA-1101 / DSM 17681 / MLHE-1).